The following is a 529-amino-acid chain: Probable cytochrome P450 6t1 (529 aa).

C472 contributes to the heme binding site.

This sequence belongs to the cytochrome P450 family. Heme serves as cofactor.

The protein resides in the endoplasmic reticulum membrane. It is found in the microsome membrane. May be involved in the metabolism of insect hormones and in the breakdown of synthetic insecticides. The sequence is that of Probable cytochrome P450 6t1 (Cyp6t1) from Drosophila melanogaster (Fruit fly).